Reading from the N-terminus, the 664-residue chain is Putative carboxypeptidase suro-1 (664 aa).

A signal peptide spans 1 to 23; sequence MRYLCKSILLAVHTILLVGSVCC. A propeptide spans 24 to 110 (activation peptide); it reads STDVHNTDDK…MSVPDVEKLI (87 aa). One can recognise a Peptidase M14 domain in the interval 160-473; sequence DYASYADMVK…EGFREVVDAV (314 aa). Residues His-219 and Glu-222 each coordinate Zn(2+). Residues 219–222, Arg-281, and 306–307 each bind substrate; these read HARE and NR. Zn(2+) is bound at residue His-361. Residue 362–363 participates in substrate binding; sequence SY. The active-site Proton donor/acceptor is Glu-437. Residues 512–543 are compositionally biased toward low complexity; sequence ASQAAGSTTRSTTTLKTSTTSVSTTSEATSPS. The disordered stretch occupies residues 512 to 590; that stretch reads ASQAAGSTTR…TTTTEEEDVT (79 aa). Pro residues predominate over residues 564 to 573; it reads PTPPMAPPIM. Over residues 574-583 the composition is skewed to low complexity; sequence SPSTEFSTTT. The ShKT domain occupies 621 to 657; that stretch reads CRDMRYSCGFWLKNNKQVCEEQQSFMRAQCAYTCKFC. 3 cysteine pairs are disulfide-bonded: Cys-621–Cys-657, Cys-628–Cys-650, and Cys-639–Cys-654.

The protein belongs to the peptidase M14 family. The cofactor is Zn(2+). Localizes in stripes along the cuticle.

It localises to the cytoplasmic vesicle. The protein localises to the secreted. In terms of biological role, may play a role in processing or organization of cuticle collagen proteins, including rol-6 and col-19. In Caenorhabditis elegans, this protein is Putative carboxypeptidase suro-1.